The sequence spans 168 residues: RxLR effector protein PITG_12737 (168 aa).

Positions 1–20 (MRACAILVVAAAAVLTGSTA) are cleaved as a signal peptide. The RxLR-dEER motif lies at 54 to 77 (RRLRKHKTVNTNSEMEYESEAEAR).

The protein belongs to the RxLR effector family.

It is found in the secreted. Its subcellular location is the host nucleus. The protein localises to the host cytoplasm. Functionally, effector that enhances P.infestans colonization of Nicotiana benthamiana leaves. The polypeptide is RxLR effector protein PITG_12737 (Phytophthora infestans (strain T30-4) (Potato late blight agent)).